A 571-amino-acid polypeptide reads, in one-letter code: DExH-box ATP-dependent RNA helicase DExH16, mitochondrial (571 aa).

The N-terminal 56 residues, 1–56, are a transit peptide targeting the mitochondrion; it reads MAYSVVRLRKVSALGISRVLQADKGSLWRFHFEPEFGDLLRLGVLTRNYRKNSGSP. In terms of domain architecture, Helicase ATP-binding spans 83–212; that stretch reads IARKKKRKVI…HLCGDPAVVP (130 aa). 96-103 is an ATP binding site; it reads GPTNSGKT. The short motif at 176-179 is the DEIH box; degenerate element; sequence DEIQ. One can recognise a Helicase C-terminal domain in the interval 213–399; the sequence is LVEDILKVTG…GLFPTFDLLS (187 aa).

The protein belongs to the DExH box helicase family. In terms of assembly, homodimer; in free form. Component of the mitochondrial degradosome (mtEXO) complex which is a heteropentamer containing 2 copies of SUPV3L1 and 3 copies of PNPT1. It depends on Mg(2+) as a cofactor. The cofactor is Mn(2+). Weakly expressed.

The protein localises to the nucleus. The protein resides in the mitochondrion matrix. Its subcellular location is the mitochondrion nucleoid. The enzyme catalyses ATP + H2O = ADP + phosphate + H(+). With respect to regulation, activated by the presence of mitochondrial RNA. Functionally, major helicase player in mitochondrial RNA metabolism. Component of the mitochondrial degradosome (mtEXO) complex, that degrades 3' overhang double-stranded RNA with a 3'-to-5' directionality in an ATP-dependent manner. ATPase and ATP-dependent multisubstrate helicase, able to unwind double-stranded (ds) DNA and RNA, and RNA/DNA heteroduplexes in the 5'-to-3' direction. Plays a role in the RNA surveillance system in mitochondria; regulates the stability of mature mRNAs, the removal of aberrantly formed mRNAs and the rapid degradation of non coding processing intermediates. Required during pollen development. The chain is DExH-box ATP-dependent RNA helicase DExH16, mitochondrial from Arabidopsis thaliana (Mouse-ear cress).